A 257-amino-acid chain; its full sequence is Zinc transporter ZupT (257 aa).

3 helical membrane-spanning segments follow: residues 5 to 25 (LILTILAGAATFIGAFLGVLG), 32 to 52 (LLAFSLGFAAGIMLLISLMEM), and 61 to 81 (GMSPVLGYGMFIFGLLGYFGL). Residues Asn-120 and Glu-123 each coordinate Fe(2+). Zn(2+)-binding residues include Glu-123 and His-148. A run of 4 helical transmembrane segments spans residues 137 to 157 (LGFGIALAVALHNIPEGLAVA), 171 to 191 (ILWAGISGLAEILGGVLAWLI), 195 to 215 (MISPVVMAAIMAAVAGIMVAL), and 236 to 256 (GVLCGMSVMGFSLVLLQTAGI). Positions 149, 152, and 181 each coordinate Fe(2+). Residue Glu-152 participates in Zn(2+) binding.

The protein belongs to the ZIP transporter (TC 2.A.5) family. ZupT subfamily.

The protein resides in the cell inner membrane. The catalysed reaction is Zn(2+)(in) = Zn(2+)(out). Functionally, mediates zinc uptake. May also transport other divalent cations. This is Zinc transporter ZupT from Escherichia coli O45:K1 (strain S88 / ExPEC).